The sequence spans 211 residues: MRNIQIALTKGRLEKHVIPLFEQIGIDCSELKNKGRKLVFQSKNTDISFILVKAVDVATYVEHGVADIGVVGKDILMENEKDIYEMLDLGVGVCKFCVASIPTYNPKSYRKKCIATKYPHITSNYFHNKGEDVEIIKIEGSVEIAPILGLADAIVDIVETGKTLQENGLIVFEEMYSISARMIVNKAALKTKKDEIFSIVNMMEQEILSGK.

This sequence belongs to the ATP phosphoribosyltransferase family. Short subfamily. In terms of assembly, heteromultimer composed of HisG and HisZ subunits.

It localises to the cytoplasm. The enzyme catalyses 1-(5-phospho-beta-D-ribosyl)-ATP + diphosphate = 5-phospho-alpha-D-ribose 1-diphosphate + ATP. The protein operates within amino-acid biosynthesis; L-histidine biosynthesis; L-histidine from 5-phospho-alpha-D-ribose 1-diphosphate: step 1/9. Its function is as follows. Catalyzes the condensation of ATP and 5-phosphoribose 1-diphosphate to form N'-(5'-phosphoribosyl)-ATP (PR-ATP). Has a crucial role in the pathway because the rate of histidine biosynthesis seems to be controlled primarily by regulation of HisG enzymatic activity. The chain is ATP phosphoribosyltransferase from Bacillus thuringiensis subsp. konkukian (strain 97-27).